A 1888-amino-acid chain; its full sequence is Zinc finger protein 106 (1888 aa).

The segment at 5 to 29 (RKCILCHIVYGSKKEMDEHMRSMLH) adopts a C2H2-type 1; atypical zinc-finger fold. A C2H2-type 2; atypical zinc finger spans residues 43 to 67 (HECRVCRVTEVGLSAYAKHISGQLH). The interval 68-187 (KDNVDAQERE…GPRGSSVWHK (120 aa)) is disordered. A compositionally biased stretch (acidic residues) spans 75–89 (EREDDGKEEEEEEYF). 3 stretches are compositionally biased toward basic and acidic residues: residues 90 to 108 (DKEL…RQDE), 118 to 138 (SDDR…DRES), and 150 to 160 (PQRDWKWEKDG). Lysine 91 participates in a covalent cross-link: Glycyl lysine isopeptide (Lys-Gly) (interchain with G-Cter in SUMO2). A Glycyl lysine isopeptide (Lys-Gly) (interchain with G-Cter in SUMO2) cross-link involves residue lysine 155. A compositionally biased stretch (polar residues) spans 161–175 (FNSTRKNSFPHSLRN). Glycyl lysine isopeptide (Lys-Gly) (interchain with G-Cter in SUMO2) cross-links involve residues lysine 265 and lysine 309. 2 disordered regions span residues 287–326 (KKSN…DTFP) and 338–362 (RESQ…TKAR). The span at 296–311 (SQERCKWQRQDRDKAA) shows a compositional bias: basic and acidic residues. The span at 342–357 (TTKQTDTAASKINGKN) shows a compositional bias: polar residues. Glycyl lysine isopeptide (Lys-Gly) (interchain with G-Cter in SUMO2) cross-links involve residues lysine 375, lysine 384, lysine 390, lysine 435, lysine 469, and lysine 479. 2 disordered regions span residues 410–437 (KPVD…HKAI) and 453–525 (TEQS…TSKS). A compositionally biased stretch (basic residues) spans 481–491 (GPHKQNLKNRS). Polar residues predominate over residues 507–525 (LLNTSTLEGSHGSSYTSKS). Residues lysine 524, lysine 534, and lysine 544 each participate in a glycyl lysine isopeptide (Lys-Gly) (interchain with G-Cter in SUMO2) cross-link. The segment at 537 to 617 (KTVSGTQKEP…SAMTSDAENH (81 aa)) is disordered. The span at 551–572 (NNTSQKAQDTVLQCPKTLQNPL) shows a compositional bias: polar residues. Lysine 577 is covalently cross-linked (Glycyl lysine isopeptide (Lys-Gly) (interchain with G-Cter in SUMO2)). The segment covering 577-593 (KRMENDAKESSVEESAK) has biased composition (basic and acidic residues). Residues 597 to 613 (SIESQPHSAGNSAMTSD) are compositionally biased toward polar residues. Residue lysine 620 forms a Glycyl lysine isopeptide (Lys-Gly) (interchain with G-Cter in SUMO2) linkage. The segment at 635-661 (STHTVDKEQGSQIPGTPENLSTSPRNS) is disordered. Polar residues predominate over residues 644–661 (GSQIPGTPENLSTSPRNS). 2 positions are modified to phosphoserine: serine 657 and serine 677. Glycyl lysine isopeptide (Lys-Gly) (interchain with G-Cter in SUMO2) cross-links involve residues lysine 687, lysine 700, lysine 721, lysine 738, lysine 758, lysine 792, and lysine 824. A disordered region spans residues 696 to 728 (NNLVKSDGPFETESFEDTSLDTELQKPDLNNQP). Phosphoserine is present on residues serine 876, serine 878, serine 881, and serine 909. Residues 894-920 (TGEGTGKENEAQQSPSPNTALSAAQSQ) are disordered. Positions 904–920 (AQQSPSPNTALSAAQSQ) are enriched in polar residues. A Glycyl lysine isopeptide (Lys-Gly) (interchain with G-Cter in SUMO2) cross-link involves residue lysine 921. Residue serine 953 is modified to Phosphoserine. Positions 968-986 (ARDLHSQERSTPLSERHAQ) are enriched in basic and acidic residues. Disordered stretches follow at residues 968 to 1064 (ARDL…ERSQ), 1281 to 1461 (EQGN…SKKD), and 1468 to 1487 (QNPI…TSEL). Positions 992 to 1008 (GNSLSSNASSGHAVSSL) are enriched in low complexity. Over residues 1013 to 1022 (TDSSCTSGAE) the composition is skewed to polar residues. A Phosphothreonine modification is found at threonine 1036. Phosphoserine is present on residues serine 1040, serine 1041, and serine 1046. A compositionally biased stretch (basic residues) spans 1050–1060 (KNKRRKIKGKK). A compositionally biased stretch (polar residues) spans 1281–1296 (EQGNSRSKGNSPSCQS). Phosphoserine is present on residues serine 1291, serine 1293, and serine 1296. Residue lysine 1310 forms a Glycyl lysine isopeptide (Lys-Gly) (interchain with G-Cter in SUMO2) linkage. Residues 1312 to 1321 (SSGSEACSSS) are compositionally biased toward low complexity. Serine 1313 bears the Phosphoserine mark. Lysine 1335 participates in a covalent cross-link: Glycyl lysine isopeptide (Lys-Gly) (interchain with G-Cter in SUMO2). Residues 1338 to 1354 (QSPADQPEQQAESTLAS) are compositionally biased toward polar residues. The residue at position 1339 (serine 1339) is a Phosphoserine. A compositionally biased stretch (basic residues) spans 1360–1373 (SKKKKKLRKKKTLR). Serine 1381 bears the Phosphoserine mark. A Phosphothreonine modification is found at threonine 1383. Residues lysine 1391, lysine 1403, lysine 1406, and lysine 1460 each participate in a glycyl lysine isopeptide (Lys-Gly) (interchain with G-Cter in SUMO2) cross-link. The span at 1450 to 1461 (GDEKPDSPSKKD) shows a compositional bias: basic and acidic residues. Residues 1470-1487 (PIETSRSGCDEVSSTSEL) show a composition bias toward polar residues. Serine 1474 carries the post-translational modification Phosphoserine. Glycyl lysine isopeptide (Lys-Gly) (interchain with G-Cter in SUMO2) cross-links involve residues lysine 1492 and lysine 1509. A disordered region spans residues 1509 to 1531 (KASKHSSEISSEPGDDEEPTEGS). WD repeat units lie at residues 1534–1573 (GHQA…GVFE), 1575–1618 (HTSK…EQLQ), 1659–1700 (HGPR…LLRT), 1703–1742 (GHSK…RIYK), 1743–1780 (GHNH…RLQV), and 1783–1820 (GHKD…NYRC). Residue lysine 1590 forms a Glycyl lysine isopeptide (Lys-Gly) (interchain with G-Cter in SUMO2) linkage. Residue lysine 1742 forms a Glycyl lysine isopeptide (Lys-Gly) (interchain with G-Cter in SUMO2) linkage. The C2H2-type 3; atypical zinc-finger motif lies at 1818–1843 (YRCWWYGCTLIFGVVDHLKQHLLTDH). Lysine 1869 participates in a covalent cross-link: Glycyl lysine isopeptide (Lys-Gly) (interchain with G-Cter in SUMO2).

As to quaternary structure, interacts with KNOP1. Interacts with TARDBP and NUP107. Interacts (via N-terminus) with RBM39. Interacts with the SH3 domains of FYN and GRB2. Phosphorylated by FYN in vitro. Widely expressed, with strongest expression in skeletal muscle, heart and brain (at protein level). Detected in spinal cord motor neurons.

The protein resides in the nucleus. Its subcellular location is the nucleolus. The protein localises to the nucleus speckle. In terms of biological role, RNA-binding protein. Specifically binds to 5'-GGGGCC-3' sequence repeats in RNA. Essential for maintenance of peripheral motor neuron and skeletal muscle function. Required for normal expression and/or alternative splicing of a number of genes in spinal cord and skeletal muscle, including the neurite outgrowth inhibitor RTN4. Also contributes to normal mitochondrial respiratory function in motor neurons, via an unknown mechanism. The polypeptide is Zinc finger protein 106 (Znf106) (Mus musculus (Mouse)).